The chain runs to 206 residues: Small ribosomal subunit protein uS4 (206 aa).

One can recognise an S4 RNA-binding domain in the interval 96-156; it reads GRLDNVVYRM…EKAKKQSRVK (61 aa).

It belongs to the universal ribosomal protein uS4 family. As to quaternary structure, part of the 30S ribosomal subunit. Contacts protein S5. The interaction surface between S4 and S5 is involved in control of translational fidelity.

In terms of biological role, one of the primary rRNA binding proteins, it binds directly to 16S rRNA where it nucleates assembly of the body of the 30S subunit. With S5 and S12 plays an important role in translational accuracy. This is Small ribosomal subunit protein uS4 from Cronobacter sakazakii (strain ATCC BAA-894) (Enterobacter sakazakii).